Consider the following 524-residue polypeptide: Bifunctional purine biosynthesis protein PurH (524 aa).

The 149-residue stretch at 1–149 folds into the MGS-like domain; the sequence is MSDPVIKRAL…KNNESVTVVT (149 aa).

This sequence belongs to the PurH family.

The enzyme catalyses (6R)-10-formyltetrahydrofolate + 5-amino-1-(5-phospho-beta-D-ribosyl)imidazole-4-carboxamide = 5-formamido-1-(5-phospho-D-ribosyl)imidazole-4-carboxamide + (6S)-5,6,7,8-tetrahydrofolate. The catalysed reaction is IMP + H2O = 5-formamido-1-(5-phospho-D-ribosyl)imidazole-4-carboxamide. Its pathway is purine metabolism; IMP biosynthesis via de novo pathway; 5-formamido-1-(5-phospho-D-ribosyl)imidazole-4-carboxamide from 5-amino-1-(5-phospho-D-ribosyl)imidazole-4-carboxamide (10-formyl THF route): step 1/1. The protein operates within purine metabolism; IMP biosynthesis via de novo pathway; IMP from 5-formamido-1-(5-phospho-D-ribosyl)imidazole-4-carboxamide: step 1/1. The polypeptide is Bifunctional purine biosynthesis protein PurH (Chlorobium chlorochromatii (strain CaD3)).